Here is a 94-residue protein sequence, read N- to C-terminus: MRKYETVFILNPALDEEGYKANVEKFKGVIENSGGTVDNVDLWGKRKLAYEVKKVSEGYYTLMNFTADTELPKELDRVFRITDTVIRHMIITQE.

The protein belongs to the bacterial ribosomal protein bS6 family.

Binds together with bS18 to 16S ribosomal RNA. The sequence is that of Small ribosomal subunit protein bS6 from Clostridium botulinum (strain Loch Maree / Type A3).